A 509-amino-acid chain; its full sequence is Bifunctional pantoate ligase/cytidylate kinase (509 aa).

The tract at residues 1–275 is pantoate--beta-alanine ligase; that stretch reads MKKLIIRKTE…CGETRLIDHV (275 aa). 29–36 contacts ATP; it reads MGNLHDGH. H36 functions as the Proton donor in the catalytic mechanism. Q61 is a (R)-pantoate binding site. A beta-alanine-binding site is contributed by Q61. An ATP-binding site is contributed by 149 to 152; sequence GEKD. A (R)-pantoate-binding site is contributed by Q155. Residue 186–189 coordinates ATP; sequence LSSR. A cytidylate kinase region spans residues 276-509; that stretch reads FLMKRRPIIA…DKIPKESEIK (234 aa).

It in the N-terminal section; belongs to the pantothenate synthetase family. The protein in the C-terminal section; belongs to the cytidylate kinase family. Type 1 subfamily.

The protein resides in the cytoplasm. It carries out the reaction (R)-pantoate + beta-alanine + ATP = (R)-pantothenate + AMP + diphosphate + H(+). It catalyses the reaction CMP + ATP = CDP + ADP. The enzyme catalyses dCMP + ATP = dCDP + ADP. It functions in the pathway cofactor biosynthesis; (R)-pantothenate biosynthesis; (R)-pantothenate from (R)-pantoate and beta-alanine: step 1/1. Catalyzes the condensation of pantoate with beta-alanine in an ATP-dependent reaction via a pantoyl-adenylate intermediate. In terms of biological role, catalyzes the transfer of a phosphate group from ATP to either CMP or dCMP to form CDP or dCDP and ADP, respectively. The polypeptide is Bifunctional pantoate ligase/cytidylate kinase (Prochlorococcus marinus (strain AS9601)).